The sequence spans 488 residues: Mannosylglycerate hydrolase MGH1 (488 aa).

Residues tyrosine 94, 98-101, tyrosine 146, glutamine 167, and glycine 227 each bind substrate; that span reads WNWD. The Proton donor role is filled by aspartate 229. Substrate contacts are provided by residues arginine 262 and 415–416; that span reads YW. Glutamate 459 acts as the Proton acceptor in catalysis.

The protein belongs to the glycosyl hydrolase 63 family.

The enzyme catalyses (2R)-2-O-(alpha-D-mannosyl)-glycerate + H2O = D-mannose + (R)-glycerate. It catalyses the reaction (2R)-2-O-(alpha-D-glucopyranosyl)-glycerate + H2O = (R)-glycerate + D-glucose. Activity is not dependent on divalent cations, but it is enhanced by Mn(2+). Catalyzes the hydrolysis of alpha-D-mannosyl-glycerate (MG) to D-glycerate and D-mannose. Can also hydrolyze alpha-D-glucopyranosyl-glycerate (GG)with lower efficiency. This is Mannosylglycerate hydrolase MGH1 from Selaginella moellendorffii (Spikemoss).